The primary structure comprises 136 residues: Large ribosomal subunit protein uL16c (136 aa).

It belongs to the universal ribosomal protein uL16 family. Part of the 50S ribosomal subunit.

The protein localises to the plastid. The protein resides in the chloroplast. The sequence is that of Large ribosomal subunit protein uL16c from Guizotia abyssinica (Niger).